The following is a 317-amino-acid chain: Beta-sarcoglycan (317 aa).

The segment at 1 to 31 (MAAAAAATEQQSSNGPVKKSMREKAVERRNV) is disordered. At 1–64 (MAAAAAATEQ…GLRGRKGNLA (64 aa)) the chain is on the cytoplasmic side. Positions 20-31 (SMREKAVERRNV) are enriched in basic and acidic residues. The chain crosses the membrane as a helical; Signal-anchor for type II membrane protein span at residues 65-85 (ICVIVLLFILAVINLIITLVI). The Extracellular portion of the chain corresponds to 86–317 (WAVIRIGPNG…TSDNPCGDLY (232 aa)). Residues Asn-157, Asn-210, and Asn-257 are each glycosylated (N-linked (GlcNAc...) asparagine). Disulfide bonds link Cys-287–Cys-313 and Cys-289–Cys-306.

It belongs to the sarcoglycan beta/delta/gamma/zeta family. Cross-link to form 2 major subcomplexes: one consisting of SGCB, SGCD and SGCG and the other consisting of SGCB and SGCD. The association between SGCB and SGCG is particularly strong while SGCA is loosely associated with the other sarcoglycans. Disulfide bonds are present.

The protein resides in the cell membrane. It localises to the sarcolemma. It is found in the cytoplasm. The protein localises to the cytoskeleton. Functionally, component of the sarcoglycan complex, a subcomplex of the dystrophin-glycoprotein complex which forms a link between the F-actin cytoskeleton and the extracellular matrix. The polypeptide is Beta-sarcoglycan (SGCB) (Bos taurus (Bovine)).